Consider the following 246-residue polypeptide: Ribosomal RNA small subunit methyltransferase J (246 aa).

S-adenosyl-L-methionine is bound by residues 115 to 116 (ER) and Asp-169.

This sequence belongs to the methyltransferase superfamily. RsmJ family.

The protein localises to the cytoplasm. It catalyses the reaction guanosine(1516) in 16S rRNA + S-adenosyl-L-methionine = N(2)-methylguanosine(1516) in 16S rRNA + S-adenosyl-L-homocysteine + H(+). Functionally, specifically methylates the guanosine in position 1516 of 16S rRNA. The protein is Ribosomal RNA small subunit methyltransferase J of Buchnera aphidicola subsp. Acyrthosiphon pisum (strain 5A).